A 324-amino-acid polypeptide reads, in one-letter code: MIGMALTAIISTMLIMVLLVVAGTFTWVERRVLGFVQERLGPNRVGPFGFLQWVADTVKILTKEDRPPPGADRVAYILAPMVAATPVLAGFGVVAFGDGLALANIDVGVMFLLGMMGLTVYGVVLGALASHSRFALMGGLRAAAQMLGYEAFLGLSLLGVVMIAGSLSLTEIVHAQRDVWFVLLQPFGAALFCIAGVAAAHRLPFDLPESENDLVAGYLTEYTGMSFGLFFLGEYLAVLLVASLAVTLFFGGWLGPVWLGPYLPGPIWFGLKVGVIALIFIWIRATLPRPRYDQLVRFAWKIALPLALANLLLTGLIVVARSAP.

The next 9 helical transmembrane spans lie at 1 to 21 (MIGMALTAIISTMLIMVLLVV), 77 to 97 (ILAPMVAATPVLAGFGVVAFG), 109 to 129 (VMFLLGMMGLTVYGVVLGALA), 147 to 167 (LGYEAFLGLSLLGVVMIAGSL), 179 to 199 (VWFVLLQPFGAALFCIAGVAA), 214 to 234 (LVAGYLTEYTGMSFGLFFLGE), 238 to 258 (VLLVASLAVTLFFGGWLGPVW), 263 to 283 (LPGPIWFGLKVGVIALIFIWI), and 298 to 318 (FAWKIALPLALANLLLTGLIV).

This sequence belongs to the complex I subunit 1 family. As to quaternary structure, NDH-1 is composed of 14 different subunits. Subunits NuoA, H, J, K, L, M, N constitute the membrane sector of the complex.

It is found in the cell inner membrane. It catalyses the reaction a quinone + NADH + 5 H(+)(in) = a quinol + NAD(+) + 4 H(+)(out). Its function is as follows. NDH-1 shuttles electrons from NADH, via FMN and iron-sulfur (Fe-S) centers, to quinones in the respiratory chain. The immediate electron acceptor for the enzyme in this species is believed to be ubiquinone. Couples the redox reaction to proton translocation (for every two electrons transferred, four hydrogen ions are translocated across the cytoplasmic membrane), and thus conserves the redox energy in a proton gradient. This subunit may bind ubiquinone. The protein is NADH-quinone oxidoreductase subunit H 2 of Rhodopseudomonas palustris (strain BisB18).